The primary structure comprises 207 residues: NADH-quinone oxidoreductase subunit A (207 aa).

The next 3 helical transmembrane spans lie at 6–26 (WSAI…LVVP), 62–82 (LVAI…AYAV), and 87–107 (AGWL…IGLV).

Belongs to the complex I subunit 3 family. As to quaternary structure, NDH-1 is composed of 14 different subunits. Subunits NuoA, H, J, K, L, M, N constitute the membrane sector of the complex.

Its subcellular location is the cell inner membrane. It carries out the reaction a quinone + NADH + 5 H(+)(in) = a quinol + NAD(+) + 4 H(+)(out). Functionally, NDH-1 shuttles electrons from NADH, via FMN and iron-sulfur (Fe-S) centers, to quinones in the respiratory chain. The immediate electron acceptor for the enzyme in this species is believed to be ubiquinone. Couples the redox reaction to proton translocation (for every two electrons transferred, four hydrogen ions are translocated across the cytoplasmic membrane), and thus conserves the redox energy in a proton gradient. The sequence is that of NADH-quinone oxidoreductase subunit A from Psychrobacter arcticus (strain DSM 17307 / VKM B-2377 / 273-4).